Consider the following 71-residue polypeptide: Exodeoxyribonuclease 7 small subunit (71 aa).

It belongs to the XseB family. As to quaternary structure, heterooligomer composed of large and small subunits.

It is found in the cytoplasm. The catalysed reaction is Exonucleolytic cleavage in either 5'- to 3'- or 3'- to 5'-direction to yield nucleoside 5'-phosphates.. Bidirectionally degrades single-stranded DNA into large acid-insoluble oligonucleotides, which are then degraded further into small acid-soluble oligonucleotides. This is Exodeoxyribonuclease 7 small subunit from Clostridium botulinum (strain Kyoto / Type A2).